We begin with the raw amino-acid sequence, 752 residues long: MPTETNQNTTQYDLFVSCSQGWEGLLQTELEQLAVGDVKPGHAGVYVSATLEQMYKICLWTRLATKVLLPLDSGPIETGDDVHTVASKVDWPSLMKPGASLKVDFIGTNDAVRNTQFGAQRVKDAVVDSIRHAGGERPNVEKMQPDVRIHARLHRDELHISIDLSGDSLHRRGYRQKQGGAPLKENLAAALLLRAGWPTIAEQGGALLDPMCGSGTLLIEGALIAYSIAPGLSRDKFGFECWTGHNADTWAQVVNDAKAIRDKNLQEKSFDIFGYDSDYYVTKAAEMNCEALGLQNVIHIANKPVEELKQPTHKVLVPGLVIVNPPYGERLGEVNELRTTYQILAHQVKQQFEGWTFAVFTSNPELAKETRLRANKKNKFKNGALPAELFVYSVLSADDAKLRKDKLTQAVQTDEDGQVENASGAWVRKNLCDKPLTEAATMVANRIKKNLKRLKKSVKQNDWHGYRVYDADMPEYSAAIDLYNDQVHIQEYAAPKTIDADKAEARFETLKHGAAVALQAPDNKLFVKTRKRNKGKAQYEKQTDTQGFDAERCIQVQEGNAKLWVNLQDYLDTGLFLDHRPLRMRIHKEATGKRFLNLFCYTATASVQAALGGATESVSVDMSNTYLEWADNNFRLNNVHLARHRLVRADCFDWLNKCREGFDLIMLDPPTFSNSKKMSDVLDIQKDQVRLISRCMDILNPGGTLYFSTNFRQFKLDEQISTRYVVENISAATIDEDFKGNPKIHYCWKIQH.

The THUMP domain maps to 53–164 (QMYKICLWTR…RDELHISIDL (112 aa)).

Belongs to the methyltransferase superfamily. RlmKL family.

It is found in the cytoplasm. It carries out the reaction guanosine(2445) in 23S rRNA + S-adenosyl-L-methionine = N(2)-methylguanosine(2445) in 23S rRNA + S-adenosyl-L-homocysteine + H(+). The enzyme catalyses guanosine(2069) in 23S rRNA + S-adenosyl-L-methionine = N(2)-methylguanosine(2069) in 23S rRNA + S-adenosyl-L-homocysteine + H(+). Its function is as follows. Specifically methylates the guanine in position 2445 (m2G2445) and the guanine in position 2069 (m7G2069) of 23S rRNA. The sequence is that of Ribosomal RNA large subunit methyltransferase K/L from Saccharophagus degradans (strain 2-40 / ATCC 43961 / DSM 17024).